We begin with the raw amino-acid sequence, 361 residues long: Chorismate synthase (361 aa).

Residues R48 and R54 each coordinate NADP(+). Residues 125-127 (RSS), 240-241 (NA), G286, 301-305 (KPTSS), and R327 contribute to the FMN site.

This sequence belongs to the chorismate synthase family. As to quaternary structure, homotetramer. The cofactor is FMNH2.

The enzyme catalyses 5-O-(1-carboxyvinyl)-3-phosphoshikimate = chorismate + phosphate. Its pathway is metabolic intermediate biosynthesis; chorismate biosynthesis; chorismate from D-erythrose 4-phosphate and phosphoenolpyruvate: step 7/7. Its function is as follows. Catalyzes the anti-1,4-elimination of the C-3 phosphate and the C-6 proR hydrogen from 5-enolpyruvylshikimate-3-phosphate (EPSP) to yield chorismate, which is the branch point compound that serves as the starting substrate for the three terminal pathways of aromatic amino acid biosynthesis. This reaction introduces a second double bond into the aromatic ring system. This chain is Chorismate synthase, found in Magnetococcus marinus (strain ATCC BAA-1437 / JCM 17883 / MC-1).